Reading from the N-terminus, the 346-residue chain is MSTLLIDLKGQTLRQEEVELLEHPLVAGLILFTRNFYDRPQIQALVKDIRQRVKKPLLITVDQEGGRVQRFRDGFTKLPAMQSFAALIQEPEQQLATAKEAGWQMAAEMTALDIDLSFAPVLDLGHECKAIGDRSFCSDAESVFRLASAFIDGMHAAGMATTGKHFPGHGHVLADSHLETPFDNRPSAVIFERDIRPFQRLIAQNKLNAVMPAHVIYTDCDDQPASGSKYWLQDILRRKLGFHGAVFSDDLGMKGAGFMGDFVTRSEKALSAGCDLLLLCNEPDGVVQVLDNLKLNESRPHFEARQQRLKTLFKKKSFNWTELTQTEKWLKNTQKLTALQAQWQSS.

Substrate contacts are provided by residues aspartate 62, arginine 70, arginine 134, and 164 to 165 (KH). Histidine 177 serves as the catalytic Proton donor/acceptor. Residue aspartate 249 is the Nucleophile of the active site.

Belongs to the glycosyl hydrolase 3 family. NagZ subfamily.

It is found in the cytoplasm. The enzyme catalyses Hydrolysis of terminal non-reducing N-acetyl-D-hexosamine residues in N-acetyl-beta-D-hexosaminides.. Its pathway is cell wall biogenesis; peptidoglycan recycling. Its function is as follows. Plays a role in peptidoglycan recycling by cleaving the terminal beta-1,4-linked N-acetylglucosamine (GlcNAc) from peptide-linked peptidoglycan fragments, giving rise to free GlcNAc, anhydro-N-acetylmuramic acid and anhydro-N-acetylmuramic acid-linked peptides. The protein is Beta-hexosaminidase of Actinobacillus succinogenes (strain ATCC 55618 / DSM 22257 / CCUG 43843 / 130Z).